A 403-amino-acid polypeptide reads, in one-letter code: 1-deoxy-D-xylulose 5-phosphate reductoisomerase (403 aa).

NADPH contacts are provided by threonine 18, glycine 19, serine 20, isoleucine 21, glutamine 46, and asparagine 132. Lysine 133 provides a ligand contact to 1-deoxy-D-xylulose 5-phosphate. Residue glutamate 134 participates in NADPH binding. Aspartate 158 provides a ligand contact to Mn(2+). 1-deoxy-D-xylulose 5-phosphate contacts are provided by serine 159, glutamate 160, serine 189, and histidine 212. Glutamate 160 lines the Mn(2+) pocket. Glycine 218 lines the NADPH pocket. Residues serine 225, asparagine 230, lysine 231, and glutamate 234 each coordinate 1-deoxy-D-xylulose 5-phosphate. A Mn(2+)-binding site is contributed by glutamate 234.

It belongs to the DXR family. Requires Mg(2+) as cofactor. Mn(2+) serves as cofactor.

The catalysed reaction is 2-C-methyl-D-erythritol 4-phosphate + NADP(+) = 1-deoxy-D-xylulose 5-phosphate + NADPH + H(+). Its pathway is isoprenoid biosynthesis; isopentenyl diphosphate biosynthesis via DXP pathway; isopentenyl diphosphate from 1-deoxy-D-xylulose 5-phosphate: step 1/6. Its function is as follows. Catalyzes the NADPH-dependent rearrangement and reduction of 1-deoxy-D-xylulose-5-phosphate (DXP) to 2-C-methyl-D-erythritol 4-phosphate (MEP). The sequence is that of 1-deoxy-D-xylulose 5-phosphate reductoisomerase from Aromatoleum aromaticum (strain DSM 19018 / LMG 30748 / EbN1) (Azoarcus sp. (strain EbN1)).